The sequence spans 534 residues: Cytochrome c oxidase subunit 1 (534 aa).

The Mitochondrial matrix portion of the chain corresponds to 1 to 14 (MVQRWLYSTNAKDI). The helical transmembrane segment at 15–39 (AVLYFMLAIFSGMAGTAMSLIIRLE) threads the bilayer. Ca(2+) contacts are provided by E39, A42, and G44. Residues 40–54 (LAAPGSQYLHGNSQL) are Mitochondrial intermembrane-facing. A helical membrane pass occupies residues 55–88 (FNVLVVGHAVLMIFFLVMPALIGGFGNYLLPLMI). Residue H62 participates in Fe(II)-heme a binding. Residues 89 to 97 (GATDTAFPR) lie on the Mitochondrial matrix side of the membrane. Residues 98–118 (INNIAFWVLPMGLVCLVTSTL) form a helical membrane-spanning segment. At 119 to 142 (VESGAGTGWTVYPPLSSIQAHSGP) the chain is on the mitochondrial intermembrane side. Residues 143–171 (SVDLAIFALHLTSISSLLGAINFIVTTLN) traverse the membrane as a helical segment. Residues 172–183 (MRTNGMTMHKLP) lie on the Mitochondrial matrix side of the membrane. The chain crosses the membrane as a helical span at residues 184–215 (LFVWSIFITAFLLLLSLPVLSAGITMLLLDRN). Topologically, residues 216–228 (FNTSFFEVSGGGD) are mitochondrial intermembrane. The helical transmembrane segment at 229–263 (PILYEHLFWFFGHPEVYILIIPGFGIISHVVSTYS) threads the bilayer. H241 serves as a coordination point for Cu cation. Residues 241–245 (HPEVY) constitute a cross-link (1'-histidyl-3'-tyrosine (His-Tyr)). Residue Y245 participates in O2 binding. Residues 264–269 (KKPVFG) are Mitochondrial matrix-facing. A helical membrane pass occupies residues 270-295 (EISMVYAMASIGLLGFLVWSHHMYIV). Residues H290 and H291 each contribute to the Cu cation site. Over 296-298 (GLD) the chain is Mitochondrial intermembrane. The chain crosses the membrane as a helical span at residues 299 to 327 (ADTRAYFTSATMIIAIPTGIKIFSWLATI). Topologically, residues 328–335 (HGGSIRLA) are mitochondrial matrix. Residues 336 to 358 (TPMLYAIAFLFLFTMGGLTGVAL) form a helical membrane-spanning segment. Residues 359-370 (ANASLDVAFHDT) lie on the Mitochondrial intermembrane side of the membrane. Mg(2+) is bound by residues H368 and D369. A helical transmembrane segment spans residues 371–400 (YYVVGHFHYVLSMGAIFSLFAGYYYWSPQI). Residue H376 coordinates heme a3. H378 provides a ligand contact to Fe(II)-heme a. The Mitochondrial matrix segment spans residues 401–406 (LGLNYN). Residues 407–431 (EKLAQIQFWLIFIGANVIFFPMHFL) form a helical membrane-spanning segment. Residues 432–449 (GINGMPRRIPDYPDAFAG) lie on the Mitochondrial intermembrane side of the membrane. P441 is a Ca(2+) binding site. A helical transmembrane segment spans residues 450–474 (WNYVASIGSFIATLSLFLFIYILYD). Residues 475–534 (QLVNGLNNKVNNKSVIYNKAPDFVESNTIFNLNTVKSSSIEFLLTSPPAVHSFNTPAVQS) are Mitochondrial matrix-facing.

Belongs to the heme-copper respiratory oxidase family. As to quaternary structure, component of the cytochrome c oxidase (complex IV, CIV), a multisubunit enzyme composed of 12 subunits. The complex is composed of a catalytic core of 3 subunits COX1, COX2 and COX3, encoded in the mitochondrial DNA, and 9 supernumerary subunits COX4, COX5A (or COX5B), COX6, COX7, COX8, COX9, COX12, COX13 and COX26, which are encoded in the nuclear genome. The complex exists as a monomer or a dimer and forms supercomplexes (SCs) in the inner mitochondrial membrane with a dimer of ubiquinol-cytochrome c oxidoreductase (cytochrome b-c1 complex, complex III, CIII), resulting in 2 different assemblies (supercomplexes III(2)IV and III(2)IV(2)). The cofactor is heme. Requires Cu cation as cofactor. Post-translationally, the N-terminus is blocked.

The protein localises to the mitochondrion inner membrane. The catalysed reaction is 4 Fe(II)-[cytochrome c] + O2 + 8 H(+)(in) = 4 Fe(III)-[cytochrome c] + 2 H2O + 4 H(+)(out). It participates in energy metabolism; oxidative phosphorylation. Functionally, component of the cytochrome c oxidase, the last enzyme in the mitochondrial electron transport chain which drives oxidative phosphorylation. The respiratory chain contains 3 multisubunit complexes succinate dehydrogenase (complex II, CII), ubiquinol-cytochrome c oxidoreductase (cytochrome b-c1 complex, complex III, CIII) and cytochrome c oxidase (complex IV, CIV), that cooperate to transfer electrons derived from NADH and succinate to molecular oxygen, creating an electrochemical gradient over the inner membrane that drives transmembrane transport and the ATP synthase. Cytochrome c oxidase is the component of the respiratory chain that catalyzes the reduction of oxygen to water. Electrons originating from reduced cytochrome c in the intermembrane space (IMS) are transferred via the dinuclear copper A center (CU(A)) of COX2 and heme A of COX1 to the active site in COX1, a binuclear center (BNC) formed by heme A3 and copper B (CU(B)). The BNC reduces molecular oxygen to 2 water molecules using 4 electrons from cytochrome c in the IMS and 4 protons from the mitochondrial matrix. COX1 is a catalytic core subunit containing heme A and the active site BNC with heme A3 and the copper atom CU(B). The sequence is that of Cytochrome c oxidase subunit 1 (COX1) from Saccharomyces cerevisiae (strain ATCC 204508 / S288c) (Baker's yeast).